The sequence spans 116 residues: Large ribosomal subunit protein bL17 (116 aa).

This sequence belongs to the bacterial ribosomal protein bL17 family. As to quaternary structure, part of the 50S ribosomal subunit. Contacts protein L32.

The sequence is that of Large ribosomal subunit protein bL17 from Prochlorococcus marinus (strain NATL2A).